Here is a 471-residue protein sequence, read N- to C-terminus: COP9 signalosome complex subunit 1 (471 aa).

Positions 249–411 (CFLLASFDHC…KILYARDVDQ (163 aa)) constitute a PCI domain. The disordered stretch occupies residues 445 to 471 (HVKSPPREGSQGELTPANSQSRMSTNM). Phosphoserine is present on residues Ser-448 and Ser-454. The span at 456–471 (GELTPANSQSRMSTNM) shows a compositional bias: polar residues. Residue Thr-459 is modified to Phosphothreonine. Phosphoserine is present on Ser-463.

It belongs to the CSN1 family. Component of the CSN complex, composed of COPS1/GPS1, COPS2, COPS3, COPS4, COPS5, COPS6, COPS7 (COPS7A or COPS7B), COPS8 and COPS9. In the complex, it probably interacts directly with COPS2, COPS3, COPS4 and COPS5. Interacts directly with inositol kinase ITPK1. Interacts with CAPN8. Interacts with USP48. Interacts with ASB4; this interaction negatively regulates GPS1. Expressed in the base region of the oxyntic and pyloric mucosae.

The protein resides in the cytoplasm. The protein localises to the nucleus. Essential component of the COP9 signalosome complex (CSN), a complex involved in various cellular and developmental processes. The CSN complex is an essential regulator of the ubiquitin (Ubl) conjugation pathway by mediating the deneddylation of the cullin subunits of SCF-type E3 ligase complexes, leading to decrease the Ubl ligase activity of SCF-type complexes such as SCF, CSA or DDB2. The complex is also involved in phosphorylation of p53/TP53, c-jun/JUN, IkappaBalpha/NFKBIA, ITPK1 and IRF8/ICSBP, possibly via its association with CK2 and PKD kinases. CSN-dependent phosphorylation of TP53 and JUN promotes and protects degradation by the Ubl system, respectively. Suppresses G-protein- and mitogen-activated protein kinase-mediated signal transduction. The protein is COP9 signalosome complex subunit 1 (Gps1) of Mus musculus (Mouse).